Here is a 284-residue protein sequence, read N- to C-terminus: Phospholipid phosphatase 1 (284 aa).

The Cytoplasmic segment spans residues 1–6 (MFDKTR). Residues 5–7 (TRL) carry the PDZ-binding; involved in localization to the apical cell membrane motif. A helical membrane pass occupies residues 7-27 (LPYVALDVLCVLLAGLPFAIL). Residues 28 to 53 (TSRHTPFQRGVFCNDESIKYPYKEDT) lie on the Extracellular side of the membrane. The chain crosses the membrane as a helical span at residues 54–74 (IPYALLGGIIIPFSIIVIILG). At 75–94 (ETLSVYCNLLHSNSFIRNNY) the chain is on the cytoplasmic side. Residues 95–115 (IATIYKAIGTFLFGAAASQSL) traverse the membrane as a helical segment. The Extracellular portion of the chain corresponds to 116–164 (TDIAKYSIGRLRPHFLDVCDPDWSKINCSDGYIEYYICRGNAERVKEGR). Residues 120-128 (KYSIGRLRP) are phosphatase sequence motif I. A glycan (N-linked (GlcNAc...) asparagine) is linked at Asn142. Residues 165-185 (LSFYSGHSSFSMYCMLFVALY) form a helical membrane-spanning segment. The segment at 168–171 (YSGH) is phosphatase sequence motif II. His171 functions as the Proton donors in the catalytic mechanism. Residues 186–199 (LQARMKGDWARLLR) are Cytoplasmic-facing. The helical transmembrane segment at 200 to 220 (PTLQFGLVAVSIYVGLSRVSD) threads the bilayer. The interval 216–227 (SRVSDYKHHWSD) is phosphatase sequence motif III. At 221–229 (YKHHWSDVL) the chain is on the extracellular side. The active-site Nucleophile is His223. The chain crosses the membrane as a helical span at residues 230 to 250 (TGLIQGALVAILVAVYVSDFF). Residues 251–284 (KERTSFKERKEEDSHTTLHETPTTGNHYPSNHQP) lie on the Cytoplasmic side of the membrane. The disordered stretch occupies residues 260–284 (KEEDSHTTLHETPTTGNHYPSNHQP). A compositionally biased stretch (polar residues) spans 269–284 (HETPTTGNHYPSNHQP).

This sequence belongs to the PA-phosphatase related phosphoesterase family. In terms of assembly, forms functional homodimers and homooligomers that are not required for substrate recognition and catalytic activity. Can also form heterooligomers with PLPP2 and PLPP3. In terms of processing, N-glycosylated. N-linked sugars are of the complex type. N-glycosylation is not required for the phosphatase activity. As to expression, widely expressed with highest expression found in prostate. Found to be down-regulated in colon adenocarcinomas. In terms of tissue distribution, predominant in kidney, lung, placenta and liver. Predominant in heart and pancreas.

Its subcellular location is the cell membrane. The protein localises to the apical cell membrane. The protein resides in the membrane raft. It localises to the membrane. It is found in the caveola. The catalysed reaction is a 1,2-diacyl-sn-glycero-3-phosphate + H2O = a 1,2-diacyl-sn-glycerol + phosphate. The enzyme catalyses 1,2-dihexadecanoyl-sn-glycero-3-phosphate + H2O = 1,2-dihexadecanoyl-sn-glycerol + phosphate. It carries out the reaction 1,2-di-(9Z-octadecenoyl)-sn-glycero-3-phosphate + H2O = 1,2-di-(9Z-octadecenoyl)-sn-glycerol + phosphate. It catalyses the reaction a monoacyl-sn-glycero-3-phosphate + H2O = a monoacylglycerol + phosphate. The catalysed reaction is (9Z)-octadecenoyl-sn-glycero-3-phosphate + H2O = (9Z-octadecenoyl)-glycerol + phosphate. The enzyme catalyses a 1-acyl-sn-glycero-3-phosphate + H2O = a 1-acyl-sn-glycerol + phosphate. It carries out the reaction 1-(9Z-octadecenoyl)-sn-glycero-3-phosphate + H2O = 1-(9Z-octadecenoyl)-sn-glycerol + phosphate. It catalyses the reaction a 1,2-diacyl-sn-glycerol 3-diphosphate + H2O = a 1,2-diacyl-sn-glycero-3-phosphate + phosphate + H(+). The catalysed reaction is sphing-4-enine 1-phosphate + H2O = sphing-4-enine + phosphate. The enzyme catalyses an N-acylsphing-4-enine 1-phosphate + H2O = an N-acylsphing-4-enine + phosphate. It carries out the reaction N-(octanoyl)-sphing-4-enine-1-phosphate + H2O = N-octanoylsphing-4-enine + phosphate. It catalyses the reaction N-(9Z-octadecenoyl)-ethanolamine phosphate + H2O = N-(9Z-octadecenoyl) ethanolamine + phosphate. The catalysed reaction is 1-hexadecanoyl-2-(9Z-octadecenoyl)-sn-glycero-3-phosphate + H2O = 1-hexadecanoyl-2-(9Z-octadecenoyl)-sn-glycerol + phosphate. It functions in the pathway lipid metabolism; phospholipid metabolism. With respect to regulation, magnesium-independent phospholipid phosphatase. Insensitive to N-ethylmaleimide. Inhibited by sphingosine, zinc ions and modestly by propanolol. Inhibited by vanadate. In terms of biological role, magnesium-independent phospholipid phosphatase of the plasma membrane that catalyzes the dephosphorylation of a variety of glycerolipid and sphingolipid phosphate esters including phosphatidate/PA, lysophosphatidate/LPA, diacylglycerol pyrophosphate/DGPP, sphingosine 1-phosphate/S1P and ceramide 1-phosphate/C1P. Also acts on N-oleoyl ethanolamine phosphate/N-(9Z-octadecenoyl)-ethanolamine phosphate, a potential physiological compound. Through its extracellular phosphatase activity allows both the hydrolysis and the cellular uptake of these bioactive lipid mediators from the milieu, regulating signal transduction in different cellular processes. It is for instance essential for the extracellular hydrolysis of S1P and subsequent conversion into intracellular S1P. Involved in the regulation of inflammation, platelets activation, cell proliferation and migration among other processes. May also have an intracellular activity to regulate phospholipid-mediated signaling pathways. This Homo sapiens (Human) protein is Phospholipid phosphatase 1.